Here is a 549-residue protein sequence, read N- to C-terminus: Cation/acetate symporter ActP (549 aa).

13 helical membrane-spanning segments follow: residues 33–53 (WQAI…TYWA), 77–97 (LAIA…ALVF), 103–123 (GLIY…LIAE), 148–168 (ILSA…QMVG), 183–203 (IAVV…GMLA), 206–226 (WVQI…AFMV), 262–282 (ISAL…PHIL), 303–323 (GFMG…IMLV), 355–375 (LFLG…VAGL), 404–424 (VSKI…VLFE), 428–448 (IAFM…PIIL), 464–484 (GGWL…TIWV), and 493–513 (IFPY…GIWF).

This sequence belongs to the sodium:solute symporter (SSF) (TC 2.A.21) family.

It is found in the cell inner membrane. Its function is as follows. Transports acetate. This Citrobacter koseri (strain ATCC BAA-895 / CDC 4225-83 / SGSC4696) protein is Cation/acetate symporter ActP.